Consider the following 120-residue polypeptide: Seripauperin-6 (120 aa).

Residues 1 to 20 (MVKLTSIAAGVAAIAATASA) form the signal peptide.

It belongs to the SRP1/TIP1 family. Seripauperin subfamily.

This Saccharomyces cerevisiae (strain ATCC 204508 / S288c) (Baker's yeast) protein is Seripauperin-6 (PAU6).